The primary structure comprises 163 residues: Cyclic pyranopterin monophosphate synthase (163 aa).

Residues leucine 75–histidine 77 and methionine 113–glutamate 114 contribute to the substrate site. Aspartate 128 is an active-site residue.

This sequence belongs to the MoaC family. Homohexamer; trimer of dimers.

The enzyme catalyses (8S)-3',8-cyclo-7,8-dihydroguanosine 5'-triphosphate = cyclic pyranopterin phosphate + diphosphate. It participates in cofactor biosynthesis; molybdopterin biosynthesis. Catalyzes the conversion of (8S)-3',8-cyclo-7,8-dihydroguanosine 5'-triphosphate to cyclic pyranopterin monophosphate (cPMP). The protein is Cyclic pyranopterin monophosphate synthase of Jannaschia sp. (strain CCS1).